A 222-amino-acid chain; its full sequence is Octanoyltransferase (222 aa).

The BPL/LPL catalytic domain occupies 34–214 (GEAPSTVLLL…EFRKHEEALV (181 aa)). Residues 72-79 (RGGKLTWH), 144-146 (AIG), and 157-159 (GVA) each bind substrate. Catalysis depends on Cys175, which acts as the Acyl-thioester intermediate.

Belongs to the LipB family.

It is found in the cytoplasm. It carries out the reaction octanoyl-[ACP] + L-lysyl-[protein] = N(6)-octanoyl-L-lysyl-[protein] + holo-[ACP] + H(+). Its pathway is protein modification; protein lipoylation via endogenous pathway; protein N(6)-(lipoyl)lysine from octanoyl-[acyl-carrier-protein]: step 1/2. Functionally, catalyzes the transfer of endogenously produced octanoic acid from octanoyl-acyl-carrier-protein onto the lipoyl domains of lipoate-dependent enzymes. Lipoyl-ACP can also act as a substrate although octanoyl-ACP is likely to be the physiological substrate. The protein is Octanoyltransferase of Pseudarthrobacter chlorophenolicus (strain ATCC 700700 / DSM 12829 / CIP 107037 / JCM 12360 / KCTC 9906 / NCIMB 13794 / A6) (Arthrobacter chlorophenolicus).